A 516-amino-acid chain; its full sequence is Citrate synthase, glyoxysomal (516 aa).

Residues 1-43 constitute a glyoxysome transit peptide; sequence MPTDMELSPSNVARHRLAVLAAHLSAASLEPPVMASSLEAHCV. Catalysis depends on residues His329, His368, and Asp424.

This sequence belongs to the citrate synthase family.

It localises to the glyoxysome. The catalysed reaction is oxaloacetate + acetyl-CoA + H2O = citrate + CoA + H(+). Its pathway is carbohydrate metabolism; glyoxylate cycle; isocitrate from oxaloacetate: step 1/2. The chain is Citrate synthase, glyoxysomal from Cucurbita maxima (Pumpkin).